The primary structure comprises 428 residues: Chaperone SurA (428 aa).

Positions 1–20 are cleaved as a signal peptide; the sequence is MKNWKTLLLGIAMIANTSFA. 2 PpiC domains span residues 171-272 and 282-382; these read STEL…KVND and VTEV…ELLD.

It localises to the periplasm. The enzyme catalyses [protein]-peptidylproline (omega=180) = [protein]-peptidylproline (omega=0). Functionally, chaperone involved in the correct folding and assembly of outer membrane proteins. Recognizes specific patterns of aromatic residues and the orientation of their side chains, which are found more frequently in integral outer membrane proteins. May act in both early periplasmic and late outer membrane-associated steps of protein maturation. This Salmonella paratyphi A (strain ATCC 9150 / SARB42) protein is Chaperone SurA.